Consider the following 298-residue polypeptide: MAVSARDYWDLTKPKVVALIVFTALVGMFLAIPDMPTWLQVRTGALGFLGIWLAASAAAAINQLLDAKIDAQMARTSWRPLVVGKVRPWQVLVFAGALIVISMTILVVWVNVITAVLTFASLIGYAVIYTVYLKRATSQNIVIGGLAGATPPMLGWAAVTGLPTSADWINASLLVLIIFIWTPPHFWALAIFRRADYAKAAIPMLPVTHGVPHTRKQILVYTVLLAIVTLAPVAVGMSGVFYLGGAIVLNAVFLWYAWRMLNPPDELFSMKMFGYSIVYLMALFAFLMVDHLLLPWVR.

9 helical membrane passes run 16-36 (VVALIVFTALVGMFLAIPDMP), 45-65 (ALGFLGIWLAASAAAAINQLL), 93-113 (VFAGALIVISMTILVVWVNVI), 114-134 (TAVLTFASLIGYAVIYTVYLK), 141-161 (IVIGGLAGATPPMLGWAAVTG), 172-192 (SLLVLIIFIWTPPHFWALAIF), 223-243 (VLLAIVTLAPVAVGMSGVFYL), 244-264 (GGAIVLNAVFLWYAWRMLNPP), and 277-297 (IVYLMALFAFLMVDHLLLPWV).

Belongs to the UbiA prenyltransferase family. Protoheme IX farnesyltransferase subfamily.

It localises to the cell inner membrane. It carries out the reaction heme b + (2E,6E)-farnesyl diphosphate + H2O = Fe(II)-heme o + diphosphate. The protein operates within porphyrin-containing compound metabolism; heme O biosynthesis; heme O from protoheme: step 1/1. Functionally, converts heme B (protoheme IX) to heme O by substitution of the vinyl group on carbon 2 of heme B porphyrin ring with a hydroxyethyl farnesyl side group. This chain is Protoheme IX farnesyltransferase, found in Xanthomonas euvesicatoria pv. vesicatoria (strain 85-10) (Xanthomonas campestris pv. vesicatoria).